Here is a 205-residue protein sequence, read N- to C-terminus: Holliday junction branch migration complex subunit RuvA (205 aa).

The segment at 1–64 is domain I; sequence MIGKLKGLID…EDQIKLFGFR (64 aa). The tract at residues 65-143 is domain II; the sequence is SDVEREWFRL…AFADVDPGVI (79 aa). The tract at residues 144 to 154 is flexible linker; it reads RLSGAIEDSRA. The domain III stretch occupies residues 154 to 205; the sequence is APQPIADAISALINLGYGQPQAAAAIAAASRAAGDKAETAQLIRLGLKELAK.

It belongs to the RuvA family. In terms of assembly, homotetramer. Forms an RuvA(8)-RuvB(12)-Holliday junction (HJ) complex. HJ DNA is sandwiched between 2 RuvA tetramers; dsDNA enters through RuvA and exits via RuvB. An RuvB hexamer assembles on each DNA strand where it exits the tetramer. Each RuvB hexamer is contacted by two RuvA subunits (via domain III) on 2 adjacent RuvB subunits; this complex drives branch migration. In the full resolvosome a probable DNA-RuvA(4)-RuvB(12)-RuvC(2) complex forms which resolves the HJ.

It is found in the cytoplasm. Functionally, the RuvA-RuvB-RuvC complex processes Holliday junction (HJ) DNA during genetic recombination and DNA repair, while the RuvA-RuvB complex plays an important role in the rescue of blocked DNA replication forks via replication fork reversal (RFR). RuvA specifically binds to HJ cruciform DNA, conferring on it an open structure. The RuvB hexamer acts as an ATP-dependent pump, pulling dsDNA into and through the RuvAB complex. HJ branch migration allows RuvC to scan DNA until it finds its consensus sequence, where it cleaves and resolves the cruciform DNA. In Bradyrhizobium sp. (strain BTAi1 / ATCC BAA-1182), this protein is Holliday junction branch migration complex subunit RuvA.